The sequence spans 1230 residues: SAM and SH3 domain-containing protein 1 (1230 aa).

The segment covering 1–10 (MEEDAGAASP) has biased composition (low complexity). Positions 1-30 (MEEDAGAASPAPEPEPEVDPARELEPEAGV) are disordered. Ser-83 and Ser-241 each carry phosphoserine. Disordered stretches follow at residues 211–249 (RQSSTLDPADWPDGSYPTLDGSSTCNSREQSDDETEDSV) and 275–337 (KKPS…LDTW). Over residues 275–297 (KKPSAEGGEEHVFENSPVQDERS) the composition is skewed to basic and acidic residues. The segment covering 324–336 (SLTPSPSSSSLDT) has biased composition (low complexity). Ser-400 is subject to Phosphoserine. 3 disordered regions span residues 439–566 (PRIS…YDTD), 610–633 (EEKPKRPTRRRKKGRPSQPKSVED), and 705–792 (VDNQ…KSCD). A compositionally biased stretch (polar residues) spans 461-470 (KYSSPVSEQD). Residues 485 to 494 (PDSEHVDKPK) show a composition bias toward basic and acidic residues. Over residues 498 to 516 (GGSVESLRSSLSGQSSMSG) the composition is skewed to low complexity. Over residues 517–529 (QTVSTTDSSTSNR) the composition is skewed to polar residues. The SH3 domain occupies 547–608 (PFCGRARVHT…KFIYVDVLNE (62 aa)). Over residues 615–624 (RPTRRRKKGR) the composition is skewed to basic residues. Positions 626–690 (SQPKSVEDLL…LTAVELLQEY (65 aa)) constitute an SAM 1 domain. Residues 737-758 (VLSTKSSTESNLKSFTRSQPGN) show a composition bias toward polar residues. Basic and acidic residues predominate over residues 768–779 (GEVRKQGEEGRL). Residues Ser-813 and Ser-831 each carry the phosphoserine modification. 2 disordered regions span residues 818–875 (EGPE…LPRG) and 915–1045 (PPQC…PWLA). The required for interaction with TRAF6 stretch occupies residues 844–852 (NVPTEMPET). The segment covering 852 to 868 (TCSQNVPEVPQKTSACT) has biased composition (polar residues). The segment covering 940–956 (GLRKGHDHHPLGTKEGV) has biased composition (basic and acidic residues). Polar residues predominate over residues 962–972 (APETRTQSRHP). Residues 1008–1019 (SPASPVSPSDCP) are compositionally biased toward low complexity. In terms of domain architecture, SAM 2 spans 1160-1224 (GCVASMSDWL…ITAARLFKLP (65 aa)).

Interacts with GNAS. Interacts with IQGAP1. Interacts with TRAF6 (via C-terminus); the interaction is LPS-dependent. Interacts with MAP3K7, CHUK and IKBKB. Expressed in the microvascular endothelium of various organs, as well as in parenchymal cells. Expressed in the endothelium but not lymphoid cells of spleen and thymus.

It is found in the cytoplasm. Its function is as follows. Is a positive regulator of NF-kappa-B signaling downstream of TLR4 activation. It acts as a scaffold molecule to assemble a molecular complex that includes TRAF6, MAP3K7, CHUK and IKBKB, thereby facilitating NF-kappa-B signaling activation. Regulates TRAF6 and MAP3K7 ubiquitination. Involved in the regulation of cell mobility. Regulates lipolysaccharide (LPS)-induced endothelial cell migration. Is involved in the regulation of skin pigmentation through the control of melanocyte migration in the epidermis. This Mus musculus (Mouse) protein is SAM and SH3 domain-containing protein 1 (Sash1).